The primary structure comprises 149 residues: Transcriptional regulator MraZ (149 aa).

SpoVT-AbrB domains are found at residues 7–54 and 83–126; these read KYVN…GISH and AVQL…QPQN.

The protein belongs to the MraZ family. In terms of assembly, forms oligomers.

Its subcellular location is the cytoplasm. The protein resides in the nucleoid. This is Transcriptional regulator MraZ from Rickettsia rickettsii (strain Sheila Smith).